Consider the following 309-residue polypeptide: Elongation factor Ts (309 aa).

Positions 82 to 85 (TDFV) are involved in Mg(2+) ion dislocation from EF-Tu.

Belongs to the EF-Ts family.

Its subcellular location is the cytoplasm. Associates with the EF-Tu.GDP complex and induces the exchange of GDP to GTP. It remains bound to the aminoacyl-tRNA.EF-Tu.GTP complex up to the GTP hydrolysis stage on the ribosome. This is Elongation factor Ts from Rickettsia rickettsii (strain Iowa).